A 115-amino-acid chain; its full sequence is Transcription initiation factor IIA subunit 2 (115 aa).

The protein belongs to the TFIIA subunit 2 family. As to quaternary structure, TFIIA is a heterodimer of the large unprocessed subunit 1 and a small subunit gamma.

The protein localises to the nucleus. Its function is as follows. TFIIA is a component of the transcription machinery of RNA polymerase II and plays an important role in transcriptional activation. TFIIA in a complex with tbp mediates transcriptional activity. In Dictyostelium discoideum (Social amoeba), this protein is Transcription initiation factor IIA subunit 2 (gtf2a2).